A 393-amino-acid chain; its full sequence is 1-deoxy-D-xylulose 5-phosphate reductoisomerase (393 aa).

Residues Thr-10, Gly-11, Ser-12, Ile-13, Gln-38, and Asn-124 each coordinate NADPH. Lys-125 provides a ligand contact to 1-deoxy-D-xylulose 5-phosphate. Position 126 (Glu-126) interacts with NADPH. Asp-150 lines the Mn(2+) pocket. Residues Ser-151, Glu-152, Ser-179, and His-202 each coordinate 1-deoxy-D-xylulose 5-phosphate. Position 152 (Glu-152) interacts with Mn(2+). Gly-208 is an NADPH binding site. The 1-deoxy-D-xylulose 5-phosphate site is built by Ser-215, Asn-220, Lys-221, and Glu-224. Glu-224 is a binding site for Mn(2+).

It belongs to the DXR family. Mg(2+) serves as cofactor. Mn(2+) is required as a cofactor.

The enzyme catalyses 2-C-methyl-D-erythritol 4-phosphate + NADP(+) = 1-deoxy-D-xylulose 5-phosphate + NADPH + H(+). Its pathway is isoprenoid biosynthesis; isopentenyl diphosphate biosynthesis via DXP pathway; isopentenyl diphosphate from 1-deoxy-D-xylulose 5-phosphate: step 1/6. In terms of biological role, catalyzes the NADPH-dependent rearrangement and reduction of 1-deoxy-D-xylulose-5-phosphate (DXP) to 2-C-methyl-D-erythritol 4-phosphate (MEP). The polypeptide is 1-deoxy-D-xylulose 5-phosphate reductoisomerase (Ralstonia nicotianae (strain ATCC BAA-1114 / GMI1000) (Ralstonia solanacearum)).